The primary structure comprises 263 residues: Shikimate dehydrogenase (NADP(+)) (263 aa).

Residues serine 16–serine 18 and threonine 65 each bind shikimate. The Proton acceptor role is filled by lysine 69. Residues asparagine 90 and aspartate 105 each coordinate shikimate. Residues glycine 125 to serine 129 and leucine 208 each bind NADP(+). A shikimate-binding site is contributed by tyrosine 210. Glycine 230 serves as a coordination point for NADP(+).

The protein belongs to the shikimate dehydrogenase family. As to quaternary structure, homodimer.

It catalyses the reaction shikimate + NADP(+) = 3-dehydroshikimate + NADPH + H(+). Its pathway is metabolic intermediate biosynthesis; chorismate biosynthesis; chorismate from D-erythrose 4-phosphate and phosphoenolpyruvate: step 4/7. Its function is as follows. Involved in the biosynthesis of the chorismate, which leads to the biosynthesis of aromatic amino acids. Catalyzes the reversible NADPH linked reduction of 3-dehydroshikimate (DHSA) to yield shikimate (SA). The sequence is that of Shikimate dehydrogenase (NADP(+)) from Helicobacter pylori (strain P12).